A 213-amino-acid polypeptide reads, in one-letter code: Redox-sensing transcriptional repressor Rex (213 aa).

Residues 17–56 (LYYRIFKRFYADQVEKASSKQIADAMGIDSATVRRDFSYF) constitute a DNA-binding region (H-T-H motif). 91–96 (GCGNIG) provides a ligand contact to NAD(+).

It belongs to the transcriptional regulatory Rex family. As to quaternary structure, homodimer.

The protein resides in the cytoplasm. Functionally, modulates transcription in response to changes in cellular NADH/NAD(+) redox state. The protein is Redox-sensing transcriptional repressor Rex of Streptococcus uberis (strain ATCC BAA-854 / 0140J).